An 850-amino-acid polypeptide reads, in one-letter code: Protein translocase subunit SecA (850 aa).

Residues Gln87, 105–109 (GEGKT), and Asp494 each bind ATP. Residues Cys834, Cys836, Cys845, and Cys846 each contribute to the Zn(2+) site.

It belongs to the SecA family. Monomer and homodimer. Part of the essential Sec protein translocation apparatus which comprises SecA, SecYEG and auxiliary proteins SecDF-YajC and YidC. Requires Zn(2+) as cofactor.

The protein resides in the cell inner membrane. It localises to the cytoplasm. It carries out the reaction ATP + H2O + cellular proteinSide 1 = ADP + phosphate + cellular proteinSide 2.. Part of the Sec protein translocase complex. Interacts with the SecYEG preprotein conducting channel. Has a central role in coupling the hydrolysis of ATP to the transfer of proteins into and across the cell membrane, serving as an ATP-driven molecular motor driving the stepwise translocation of polypeptide chains across the membrane. This Desulfotalea psychrophila (strain LSv54 / DSM 12343) protein is Protein translocase subunit SecA.